Here is a 167-residue protein sequence, read N- to C-terminus: Transcription antitermination protein NusB (167 aa).

Residues 1-21 (MIPTDTAPPSKPAQGHKGYKN) form a disordered region.

It belongs to the NusB family.

In terms of biological role, involved in transcription antitermination. Required for transcription of ribosomal RNA (rRNA) genes. Binds specifically to the boxA antiterminator sequence of the ribosomal RNA (rrn) operons. The chain is Transcription antitermination protein NusB from Nitrosomonas eutropha (strain DSM 101675 / C91 / Nm57).